Consider the following 352-residue polypeptide: tRNA uridine(34) hydroxylase (352 aa).

Residues 146–240 (DNPDTLFVDM…YARKAREQGL (95 aa)) enclose the Rhodanese domain. Residue Cys200 is the Cysteine persulfide intermediate of the active site. Residues 315–328 (ETEQRARRAGRENG) show a composition bias toward basic and acidic residues. The interval 315–352 (ETEQRARRAGRENGAKIFNKSRHRLQDGLNSTSLQSVE) is disordered. Residues 342–352 (GLNSTSLQSVE) are compositionally biased toward polar residues.

It belongs to the TrhO family.

It carries out the reaction uridine(34) in tRNA + AH2 + O2 = 5-hydroxyuridine(34) in tRNA + A + H2O. Functionally, catalyzes oxygen-dependent 5-hydroxyuridine (ho5U) modification at position 34 in tRNAs. The sequence is that of tRNA uridine(34) hydroxylase from Photorhabdus laumondii subsp. laumondii (strain DSM 15139 / CIP 105565 / TT01) (Photorhabdus luminescens subsp. laumondii).